Reading from the N-terminus, the 355-residue chain is Ribosomal RNA large subunit methyltransferase M (355 aa).

Residues S191, 224-227, D243, D263, and D279 each bind S-adenosyl-L-methionine; that span reads APGG. The Proton acceptor role is filled by K308.

This sequence belongs to the class I-like SAM-binding methyltransferase superfamily. RNA methyltransferase RlmE family. RlmM subfamily. As to quaternary structure, monomer.

The protein localises to the cytoplasm. It catalyses the reaction cytidine(2498) in 23S rRNA + S-adenosyl-L-methionine = 2'-O-methylcytidine(2498) in 23S rRNA + S-adenosyl-L-homocysteine + H(+). Functionally, catalyzes the 2'-O-methylation at nucleotide C2498 in 23S rRNA. This Stenotrophomonas maltophilia (strain R551-3) protein is Ribosomal RNA large subunit methyltransferase M.